We begin with the raw amino-acid sequence, 160 residues long: SsrA-binding protein (160 aa).

Over residues 137 to 153 (DKRDDIKTREWKQDKAR) the composition is skewed to basic and acidic residues. The interval 137-160 (DKRDDIKTREWKQDKARIMKNANR) is disordered.

It belongs to the SmpB family.

The protein localises to the cytoplasm. Functionally, required for rescue of stalled ribosomes mediated by trans-translation. Binds to transfer-messenger RNA (tmRNA), required for stable association of tmRNA with ribosomes. tmRNA and SmpB together mimic tRNA shape, replacing the anticodon stem-loop with SmpB. tmRNA is encoded by the ssrA gene; the 2 termini fold to resemble tRNA(Ala) and it encodes a 'tag peptide', a short internal open reading frame. During trans-translation Ala-aminoacylated tmRNA acts like a tRNA, entering the A-site of stalled ribosomes, displacing the stalled mRNA. The ribosome then switches to translate the ORF on the tmRNA; the nascent peptide is terminated with the 'tag peptide' encoded by the tmRNA and targeted for degradation. The ribosome is freed to recommence translation, which seems to be the essential function of trans-translation. This chain is SsrA-binding protein, found in Edwardsiella ictaluri (strain 93-146).